A 237-amino-acid polypeptide reads, in one-letter code: Ribosomal RNA small subunit methyltransferase G (237 aa).

Residues G79, 130 to 131 (CE), and R147 contribute to the S-adenosyl-L-methionine site.

Belongs to the methyltransferase superfamily. RNA methyltransferase RsmG family.

The protein resides in the cytoplasm. Specifically methylates the N7 position of a guanine in 16S rRNA. In Malacoplasma penetrans (strain HF-2) (Mycoplasma penetrans), this protein is Ribosomal RNA small subunit methyltransferase G.